The sequence spans 211 residues: Ubiquitin-conjugating enzyme E2 S-C (211 aa).

Residues 11-157 (HIIRRVYKEV…AKLMTEIHAQ (147 aa)) enclose the UBC core domain. Residue C95 is the Glycyl thioester intermediate of the active site. The segment at 158-211 (GSTLRGKDPTDPCSSASATVVSGDGPMAKKHAGDRDKKLAAKKKTDKKRALRRL) is disordered. Residues 197–211 (AAKKKTDKKRALRRL) show a composition bias toward basic residues.

It belongs to the ubiquitin-conjugating enzyme family.

The enzyme catalyses S-ubiquitinyl-[E1 ubiquitin-activating enzyme]-L-cysteine + [E2 ubiquitin-conjugating enzyme]-L-cysteine = [E1 ubiquitin-activating enzyme]-L-cysteine + S-ubiquitinyl-[E2 ubiquitin-conjugating enzyme]-L-cysteine.. It functions in the pathway protein modification; protein ubiquitination. Catalyzes the covalent attachment of ubiquitin to other proteins. Acts as an essential factor of the anaphase promoting complex/cyclosome (APC/C), a cell cycle-regulated ubiquitin ligase that controls progression through mitosis. Acts by specifically elongating 'Lys-11'-linked polyubiquitin chains initiated by the E2 enzyme ube2c/ubch10 on APC/C substrates, enhancing the degradation of APC/C substrates by the proteasome and promoting mitotic exit. This chain is Ubiquitin-conjugating enzyme E2 S-C (ube2s-c), found in Xenopus laevis (African clawed frog).